Here is a 955-residue protein sequence, read N- to C-terminus: uncharacterized protein (955 aa).

The signal sequence occupies residues 1–24 (MQSSLIKILGVLAIVATLVCFVFA). Residues 127 to 146 (STRPGKSNLDDNGKMIPIPR) are disordered. 6 helical membrane-spanning segments follow: residues 597 to 617 (IKALLILYVMVYGAMFLLGFA), 707 to 727 (LGLSGIIYFIITVIAVMIVII), 739 to 759 (AFMATCILIGIAPIFISFLLF), 781 to 801 (VVLMAGIIVLTQLFTIYLDFV), 818 to 838 (FIGTILPVALLNVPIFCINWF), and 857 to 877 (IVALVIIAYGMYGYVEFSGNM). The interval 905-955 (LSQVGMDEKTRKGITGRAKERLKQRNETLKQAEKTRKNAPKEEPPKAEIPK) is disordered. The segment covering 910 to 955 (MDEKTRKGITGRAKERLKQRNETLKQAEKTRKNAPKEEPPKAEIPK) has biased composition (basic and acidic residues).

This sequence belongs to the TrbL/VirB6 family.

Its subcellular location is the cell membrane. This is an uncharacterized protein from Rickettsia bellii (strain RML369-C).